The sequence spans 127 residues: Apolipoprotein C-IV (127 aa).

A signal peptide spans 1–27 (MSLLRNRLQDLPALCLCVLVLACIGAC).

Belongs to the apolipoprotein C4 family.

It localises to the secreted. Its function is as follows. May participate in lipoprotein metabolism. The sequence is that of Apolipoprotein C-IV (APOC4) from Papio anubis (Olive baboon).